The primary structure comprises 141 residues: Large ribosomal subunit protein uL11 (141 aa).

This sequence belongs to the universal ribosomal protein uL11 family. In terms of assembly, part of the ribosomal stalk of the 50S ribosomal subunit. Interacts with L10 and the large rRNA to form the base of the stalk. L10 forms an elongated spine to which L12 dimers bind in a sequential fashion forming a multimeric L10(L12)X complex. Post-translationally, one or more lysine residues are methylated.

Functionally, forms part of the ribosomal stalk which helps the ribosome interact with GTP-bound translation factors. The polypeptide is Large ribosomal subunit protein uL11 (Moorella thermoacetica (strain ATCC 39073 / JCM 9320)).